The following is a 203-amino-acid chain: Glycerol-3-phosphate acyltransferase (203 aa).

4 helical membrane passes run 6–26 (LTLL…AVLV), 82–102 (AISL…PIFF), 118–138 (APIG…LVLI), and 141–161 (YSSL…WWLD).

This sequence belongs to the PlsY family. Probably interacts with PlsX.

The protein resides in the cell inner membrane. The catalysed reaction is an acyl phosphate + sn-glycerol 3-phosphate = a 1-acyl-sn-glycero-3-phosphate + phosphate. Its pathway is lipid metabolism; phospholipid metabolism. Catalyzes the transfer of an acyl group from acyl-phosphate (acyl-PO(4)) to glycerol-3-phosphate (G3P) to form lysophosphatidic acid (LPA). This enzyme utilizes acyl-phosphate as fatty acyl donor, but not acyl-CoA or acyl-ACP. The chain is Glycerol-3-phosphate acyltransferase from Shewanella sp. (strain ANA-3).